The primary structure comprises 464 residues: Argininosuccinate lyase (464 aa).

Belongs to the lyase 1 family. Argininosuccinate lyase subfamily.

It is found in the cytoplasm. It carries out the reaction 2-(N(omega)-L-arginino)succinate = fumarate + L-arginine. It participates in amino-acid biosynthesis; L-arginine biosynthesis; L-arginine from L-ornithine and carbamoyl phosphate: step 3/3. The sequence is that of Argininosuccinate lyase from Alcanivorax borkumensis (strain ATCC 700651 / DSM 11573 / NCIMB 13689 / SK2).